Here is a 268-residue protein sequence, read N- to C-terminus: Movement protein (268 aa).

The segment at Lys-217–Phe-268 is disordered. Polar residues predominate over residues Glu-259 to Phe-268.

The protein belongs to the tobamovirus movement protein family. As to quaternary structure, binds to host RBCS at the plasmodesmata; this interaction seems required for viral systemic movement. In resistant plants, interacts with host MBP2C at host microtubules; this interaction prevents virus cell to cell movement. In resistant plants, interacts with host resistance (R) protein (e.g. tomato ToMV resistance protein TM-2(2), AC Q71BG9) at the host plasma membrane; this interaction triggers host defense responses leading to programmed cell death.

The protein localises to the host cytoplasm. It localises to the host cytoskeleton. The protein resides in the host cell junction. It is found in the host plasmodesma. In terms of biological role, transports viral genome to neighboring plant cells directly through plasmosdesmata, without any budding. The movement protein allows efficient cell to cell propagation, by bypassing the host cell wall barrier. Forms a ribonucleoprotein complex with viral RNA. Binds microtubules and modulates microtubule stability. Can bind double-stranded DNA. Triggers host hypersensitive defense reaction in incompatible plants harboring resistance (R) proteins. The protein is Movement protein (MP) of Allium chinense (Common tobacco).